The primary structure comprises 567 residues: Thiol:disulfide interchange protein DsbD (567 aa).

Positions 1-19 (MAQRIFTLILLLCSTSAFA) are cleaved as a signal peptide. Disulfide bonds link cysteine 122–cysteine 128 and cysteine 185–cysteine 307. Transmembrane regions (helical) follow at residues 170–192 (ALWA…MYPL), 212–234 (LAFI…VAAA), 246–268 (YVLI…LFTL), 297–319 (GAIA…LLYI), 326–348 (WLGG…LVTV), 358–380 (GPWM…VFLL), and 387–409 (AWGL…ITSL). Residues 435–567 (QDWAFGSPSA…FSAHLHDRQP (133 aa)) form the Thioredoxin domain. Cysteine 482 and cysteine 485 are joined by a disulfide.

This sequence belongs to the thioredoxin family. DsbD subfamily.

Its subcellular location is the cell inner membrane. The catalysed reaction is [protein]-dithiol + NAD(+) = [protein]-disulfide + NADH + H(+). The enzyme catalyses [protein]-dithiol + NADP(+) = [protein]-disulfide + NADPH + H(+). Functionally, required to facilitate the formation of correct disulfide bonds in some periplasmic proteins and for the assembly of the periplasmic c-type cytochromes. Acts by transferring electrons from cytoplasmic thioredoxin to the periplasm. This transfer involves a cascade of disulfide bond formation and reduction steps. The protein is Thiol:disulfide interchange protein DsbD of Salmonella typhimurium (strain LT2 / SGSC1412 / ATCC 700720).